Here is a 1034-residue protein sequence, read N- to C-terminus: Potassium-transporting ATPase alpha chain 1 (1034 aa).

The Cytoplasmic segment spans residues 1–97; that stretch reads MGKAENYELY…NALRPPRGTP (97 aa). A phosphotyrosine mark is found at Tyr7 and Tyr10. The segment at 14–41 is disordered; sequence LGSGPGGDMTAKMSKKKAGGGGGKKKEK. Positions 26–39 are enriched in basic residues; sequence MSKKKAGGGGGKKK. Position 27 is a phosphoserine (Ser27). The helical transmembrane segment at 98–118 threads the bilayer; the sequence is EYVKFARQLAGGLQCLMWVAA. The Lumenal segment spans residues 119-141; the sequence is AICLIAFAIQASEGDLTTDDNLY. The helical transmembrane segment at 142 to 162 threads the bilayer; the sequence is LAVALIAVVVVTGCFGYYQEF. Residues 163–298 are Cytoplasmic-facing; sequence KSTNIIASFK…NEKTPIAIEI (136 aa). A helical transmembrane segment spans residues 299–318; it reads EHFVDIIAGLAILFGATFFV. Topologically, residues 319–330 are lumenal; the sequence is VAMCIGYTFLRA. The helical transmembrane segment at 331–348 threads the bilayer; that stretch reads MVFFMAIVVAYVPEGLLA. Residues Val339, Ala340, Val342, and Glu344 each coordinate K(+). The Cytoplasmic segment spans residues 349–782; it reads TVTVCLSLTA…EQGRLIFDNL (434 aa). Asp386 functions as the 4-aspartylphosphate intermediate in the catalytic mechanism. Mg(2+)-binding residues include Asp386 and Thr388. Phosphoserine is present on residues Ser462 and Ser600. 2 residues coordinate Mg(2+): Asp727 and Asp731. A helical transmembrane segment spans residues 783–802; sequence KKSIAYTLTKNIPELTPYLI. A K(+)-binding site is contributed by Glu796. The Lumenal segment spans residues 803-812; sequence YITVSVPLPL. Residues 813 to 833 traverse the membrane as a helical segment; sequence GCITILFIELCTDIFPSVSLA. Position 821 (Glu821) interacts with K(+). Over 834–853 the chain is Cytoplasmic; the sequence is YEKAESDIMHLRPRNPKRDR. Ser839 carries the phosphoserine modification. The chain crosses the membrane as a helical span at residues 854–876; sequence LVNEPLAAYSYFQIGAIQSFAGF. The Lumenal segment spans residues 877-928; it reads ADYFTAMAQEGWFPLLCVGLRPQWEDHHLQDLQDSYGQEWTFGQRLYQQYTC. Residues 929–948 form a helical membrane-spanning segment; it reads YTVFFISIEMCQIADVLIRK. At 949 to 962 the chain is on the cytoplasmic side; the sequence is TRRLSVFQQGFFRN. Ser953 carries the post-translational modification Phosphoserine; by PKA. The helical transmembrane segment at 963–981 threads the bilayer; it reads KILVIAIVFQVCIGCFLCY. At 982-996 the chain is on the lumenal side; sequence CPGMPNIFNFMPIRF. The helical transmembrane segment at 997–1017 threads the bilayer; sequence QWWLVPMPFGLLIFVYDEIRK. At 1018-1034 the chain is on the cytoplasmic side; that stretch reads LGVRCCPGSWWDQELYY.

Belongs to the cation transport ATPase (P-type) (TC 3.A.3) family. Type IIC subfamily. The gastric H(+)/K(+) ATPase pump is composed of the catalytic alpha subunit ATP4A and the regulatory beta subunit ATP4B. Interacts (via the P-domain) with ATP4B (via N-terminus); this interaction stabilizes the lumenal-open E2 conformation state and prevents the reverse reaction of the transport cycle. In terms of tissue distribution, expressed in parietal cells (at protein level).

The protein resides in the apical cell membrane. The catalysed reaction is K(+)(out) + ATP + H2O + H(+)(in) = K(+)(in) + ADP + phosphate + 2 H(+)(out). Its function is as follows. The catalytic subunit of the gastric H(+)/K(+) ATPase pump which transports H(+) ions in exchange for K(+) ions across the apical membrane of parietal cells. Uses ATP as an energy source to pump H(+) ions to the gastric lumen while transporting K(+) ion from the lumen into the cell. Remarkably generates a million-fold proton gradient across the gastric parietal cell membrane, acidifying the gastric juice down to pH 1. Within a transport cycle, the transfer of a H(+) ion across the membrane is coupled to ATP hydrolysis and is associated with a transient phosphorylation that shifts the pump conformation from inward-facing (E1) to outward-facing state (E2). The release of the H(+) ion in the stomach lumen is followed by binding of K(+) ion converting the pump conformation back to the E1 state. This is Potassium-transporting ATPase alpha chain 1 from Mus musculus (Mouse).